A 355-amino-acid chain; its full sequence is MQVEVDLPNHPYHIKIEEGCFSEAGDWVSHLWQKQMITIITDSNVEILYGESLVNQLKKQGFTVHVFSFAAGEASKTLEVANRIYAFLAKHHMTRSDGIIALGGGVVGDLAAFVASTYMRGIHFLQIPTSLTAQVDSSIGGKTGVNTSFAKNMVGTFAQPDGVLIDPVTLKTLGNRELVEGMGEVIKYGLIDDIKLWHILEEMDGTIDSILDNALAIIYHSCQVKRKHVLADQYDKGLRMHLNFGHTIGHAIEVHAGYGEIMHGEAVAIGMIQLSRVAERKNLMPRGISQDIYNMCLKFGLPVHYAEWDKDVLFDILSHDKKASGQFIKIVILPQLGSATVHQIPLEEMRDYLEK.

Residues 105–109 (GVVGD), 129–130 (TS), K142, K151, and 169–172 (TLKT) contribute to the NAD(+) site. Residues E184, H246, and H263 each coordinate Zn(2+).

The protein belongs to the sugar phosphate cyclases superfamily. Dehydroquinate synthase family. Requires NAD(+) as cofactor. The cofactor is Co(2+). Zn(2+) is required as a cofactor.

The protein resides in the cytoplasm. It catalyses the reaction 7-phospho-2-dehydro-3-deoxy-D-arabino-heptonate = 3-dehydroquinate + phosphate. It functions in the pathway metabolic intermediate biosynthesis; chorismate biosynthesis; chorismate from D-erythrose 4-phosphate and phosphoenolpyruvate: step 2/7. In terms of biological role, catalyzes the conversion of 3-deoxy-D-arabino-heptulosonate 7-phosphate (DAHP) to dehydroquinate (DHQ). This Streptococcus agalactiae serotype V (strain ATCC BAA-611 / 2603 V/R) protein is 3-dehydroquinate synthase.